A 245-amino-acid polypeptide reads, in one-letter code: 1-(5-phosphoribosyl)-5-[(5-phosphoribosylamino)methylideneamino] imidazole-4-carboxamide isomerase (245 aa).

Aspartate 7 functions as the Proton acceptor in the catalytic mechanism. The Proton donor role is filled by aspartate 129.

The protein belongs to the HisA/HisF family.

Its subcellular location is the cytoplasm. The catalysed reaction is 1-(5-phospho-beta-D-ribosyl)-5-[(5-phospho-beta-D-ribosylamino)methylideneamino]imidazole-4-carboxamide = 5-[(5-phospho-1-deoxy-D-ribulos-1-ylimino)methylamino]-1-(5-phospho-beta-D-ribosyl)imidazole-4-carboxamide. The protein operates within amino-acid biosynthesis; L-histidine biosynthesis; L-histidine from 5-phospho-alpha-D-ribose 1-diphosphate: step 4/9. This is 1-(5-phosphoribosyl)-5-[(5-phosphoribosylamino)methylideneamino] imidazole-4-carboxamide isomerase from Salmonella arizonae (strain ATCC BAA-731 / CDC346-86 / RSK2980).